The primary structure comprises 334 residues: Anthranilate phosphoribosyltransferase (334 aa).

Residues glycine 79, 82-83 (GD), serine 87, 89-92 (NIST), 107-115 (KHGNRSISS), and serine 119 each bind 5-phospho-alpha-D-ribose 1-diphosphate. Glycine 79 is a binding site for anthranilate. Serine 91 contributes to the Mg(2+) binding site. Residue asparagine 110 participates in anthranilate binding. Anthranilate is bound at residue arginine 165. 2 residues coordinate Mg(2+): aspartate 224 and glutamate 225.

Belongs to the anthranilate phosphoribosyltransferase family. In terms of assembly, homodimer. Mg(2+) serves as cofactor.

The enzyme catalyses N-(5-phospho-beta-D-ribosyl)anthranilate + diphosphate = 5-phospho-alpha-D-ribose 1-diphosphate + anthranilate. It participates in amino-acid biosynthesis; L-tryptophan biosynthesis; L-tryptophan from chorismate: step 2/5. Functionally, catalyzes the transfer of the phosphoribosyl group of 5-phosphorylribose-1-pyrophosphate (PRPP) to anthranilate to yield N-(5'-phosphoribosyl)-anthranilate (PRA). The sequence is that of Anthranilate phosphoribosyltransferase from Streptococcus pneumoniae (strain 70585).